We begin with the raw amino-acid sequence, 101 residues long: Large ribosomal subunit protein bL21 (101 aa).

It belongs to the bacterial ribosomal protein bL21 family. In terms of assembly, part of the 50S ribosomal subunit. Contacts protein L20.

In terms of biological role, this protein binds to 23S rRNA in the presence of protein L20. The protein is Large ribosomal subunit protein bL21 of Corynebacterium glutamicum (strain R).